Consider the following 142-residue polypeptide: Hemoglobin subunit alpha (142 aa).

The region spanning 2-142 (VLSPADKTNV…VSTVLTSKYR (141 aa)) is the Globin domain. Ser-4 is modified (phosphoserine). Lys-8 carries the N6-succinyllysine modification. Thr-9 carries the phosphothreonine modification. Lys-12 is modified (N6-succinyllysine). Lys-17 bears the N6-acetyllysine; alternate mark. N6-succinyllysine; alternate is present on Lys-17. Tyr-25 is subject to Phosphotyrosine. Ser-36 carries the post-translational modification Phosphoserine. Lys-41 is modified (N6-succinyllysine). A Phosphoserine modification is found at Ser-50. His-59 lines the O2 pocket. His-88 is a binding site for heme b. Ser-103 is subject to Phosphoserine. Thr-109 carries the post-translational modification Phosphothreonine. A phosphoserine mark is found at Ser-125 and Ser-132. Residues Thr-135 and Thr-138 each carry the phosphothreonine modification. Phosphoserine is present on Ser-139.

This sequence belongs to the globin family. Heterotetramer of two alpha chains and two beta chains. Red blood cells.

In terms of biological role, involved in oxygen transport from the lung to the various peripheral tissues. Its function is as follows. Hemopressin acts as an antagonist peptide of the cannabinoid receptor CNR1. Hemopressin-binding efficiently blocks cannabinoid receptor CNR1 and subsequent signaling. This Sapajus apella (Brown-capped capuchin) protein is Hemoglobin subunit alpha (HBA).